Here is a 264-residue protein sequence, read N- to C-terminus: Thymidylate synthase (264 aa).

Residue arginine 21 participates in dUMP binding. Histidine 51 is a (6R)-5,10-methylene-5,6,7,8-tetrahydrofolate binding site. Residue 126 to 127 participates in dUMP binding; sequence RR. Catalysis depends on cysteine 146, which acts as the Nucleophile. DUMP-binding positions include 166 to 169, asparagine 177, and 207 to 209; these read RSAD and HLY. (6R)-5,10-methylene-5,6,7,8-tetrahydrofolate is bound at residue aspartate 169. Alanine 263 contributes to the (6R)-5,10-methylene-5,6,7,8-tetrahydrofolate binding site.

It belongs to the thymidylate synthase family. Bacterial-type ThyA subfamily. In terms of assembly, homodimer.

It is found in the cytoplasm. It carries out the reaction dUMP + (6R)-5,10-methylene-5,6,7,8-tetrahydrofolate = 7,8-dihydrofolate + dTMP. It participates in pyrimidine metabolism; dTTP biosynthesis. Its function is as follows. Catalyzes the reductive methylation of 2'-deoxyuridine-5'-monophosphate (dUMP) to 2'-deoxythymidine-5'-monophosphate (dTMP) while utilizing 5,10-methylenetetrahydrofolate (mTHF) as the methyl donor and reductant in the reaction, yielding dihydrofolate (DHF) as a by-product. This enzymatic reaction provides an intracellular de novo source of dTMP, an essential precursor for DNA biosynthesis. This Bartonella bacilliformis (strain ATCC 35685 / KC583 / Herrer 020/F12,63) protein is Thymidylate synthase.